The primary structure comprises 358 residues: MKFLDEAKVYIRSGDGGNGCVAFRREKFIEFGGPSGGNGGRGGDVIVEVADGLNTLIDYRYQQHFKAPKGANGMGSDRHGANGKAIVLKVPLGTQIIDEDRETLIHDFTRVGERLVLAEGGNGGFGNAHFKSSTNRAPRRANPGQPGEERWIWLRLKLIADAGLVGLPNAGKSTFLSKVSAAKPKIADYPFTTLHPQLGVVRVQDREFVLADIPGLIEGAHEGAGLGDRFLGHVERCRVLLHLVDAGCDHAGRAYKIVRGEMEAYAGALAEKVEIVALNKIDAVTAEDLKKQRDRLKRAAKKTPLLVSGVTGEGVQDVLRALVEVIGQAPVSDKAKGADASAAQAMETPVARAKPWSP.

An Obg domain is found at 1 to 159 (MKFLDEAKVY…RWIWLRLKLI (159 aa)). Positions 160–327 (ADAGLVGLPN…VLRALVEVIG (168 aa)) constitute an OBG-type G domain. GTP-binding positions include 166–173 (GLPNAGKS), 191–195 (FTTLH), 212–215 (DIPG), 279–282 (NKID), and 308–310 (SGV). Residues serine 173 and threonine 193 each coordinate Mg(2+). A disordered region spans residues 335–358 (AKGADASAAQAMETPVARAKPWSP).

This sequence belongs to the TRAFAC class OBG-HflX-like GTPase superfamily. OBG GTPase family. As to quaternary structure, monomer. It depends on Mg(2+) as a cofactor.

The protein resides in the cytoplasm. Its function is as follows. An essential GTPase which binds GTP, GDP and possibly (p)ppGpp with moderate affinity, with high nucleotide exchange rates and a fairly low GTP hydrolysis rate. Plays a role in control of the cell cycle, stress response, ribosome biogenesis and in those bacteria that undergo differentiation, in morphogenesis control. The sequence is that of GTPase Obg from Nitrobacter winogradskyi (strain ATCC 25391 / DSM 10237 / CIP 104748 / NCIMB 11846 / Nb-255).